We begin with the raw amino-acid sequence, 241 residues long: Tetraspanin-1 (241 aa).

Residues M1–M11 lie on the Cytoplasmic side of the membrane. The helical transmembrane segment at I12 to I34 threads the bilayer. Residues D35–F53 are Extracellular-facing. The helical transmembrane segment at V54–Y76 threads the bilayer. Residues G77 to T88 lie on the Cytoplasmic side of the membrane. Residues F89–T111 form a helical membrane-spanning segment. Over T112 to T214 the chain is Extracellular. N141, N154, N178, and N184 each carry an N-linked (GlcNAc...) asparagine glycan. Residues V215–Y237 traverse the membrane as a helical segment. Over C238 to Q241 the chain is Cytoplasmic.

The protein belongs to the tetraspanin (TM4SF) family. Interacts with SLC19A2. Interacts with NTRK1/TRKA.

The protein localises to the lysosome membrane. Structural component of specialized membrane microdomains known as tetraspanin-enriched microdomains (TERMs), which act as platforms for receptor clustering and signaling. Participates thereby in diverse biological functions such as cell signal transduction, adhesion, migration and protein trafficking. Regulates neuronal differentiation in response to NGF by facilitating NGF-mediated activation of NTRK1/TRKA receptor tyrosine kinase and subsequent downstream signaling pathways. Plays a role in the inhibition of TNFalpha-induced apoptosis. Mechanistically, inhibits the NF-kappa-B signaling pathway by blocking phosphorylation of CHUK. Also promotes the stability of the thiamine transporter 1/SLC19A2 in intestinal epithelial cells leading to an increase of thiamine uptake process. This Pongo abelii (Sumatran orangutan) protein is Tetraspanin-1 (TSPAN1).